Consider the following 168-residue polypeptide: ATP synthase subunit b, sodium ion specific (168 aa).

A helical membrane pass occupies residues Val9–Phe29.

This sequence belongs to the ATPase B chain family. F-type ATPases have 2 components, F(1) - the catalytic core - and F(0) - the membrane proton channel. F(1) has five subunits: alpha(3), beta(3), gamma(1), delta(1), epsilon(1). F(0) has three main subunits: a(1), b(2) and c(10-14). The alpha and beta chains form an alternating ring which encloses part of the gamma chain. F(1) is attached to F(0) by a central stalk formed by the gamma and epsilon chains, while a peripheral stalk is formed by the delta and b chains.

The protein resides in the cell inner membrane. Functionally, f(1)F(0) ATP synthase produces ATP from ADP in the presence of a proton or sodium gradient. F-type ATPases consist of two structural domains, F(1) containing the extramembraneous catalytic core and F(0) containing the membrane proton channel, linked together by a central stalk and a peripheral stalk. During catalysis, ATP synthesis in the catalytic domain of F(1) is coupled via a rotary mechanism of the central stalk subunits to proton translocation. Component of the F(0) channel, it forms part of the peripheral stalk, linking F(1) to F(0). This Propionigenium modestum protein is ATP synthase subunit b, sodium ion specific (atpF).